The sequence spans 178 residues: Oligoribonuclease (178 aa).

Residues 7 to 168 (LIWIDLEMTG…DDIRESIAEL (162 aa)) enclose the Exonuclease domain. Tyrosine 128 is an active-site residue.

This sequence belongs to the oligoribonuclease family.

It localises to the cytoplasm. In terms of biological role, 3'-to-5' exoribonuclease specific for small oligoribonucleotides. The chain is Oligoribonuclease from Francisella tularensis subsp. tularensis (strain FSC 198).